Reading from the N-terminus, the 148-residue chain is MKQNVFFLIAYFSLVFCMCNAVSHFKNCADKQLSDDKPLQCKIRNLQVDGNMPKVKEYMNCAFESSGWAKDGGKKLDTSKVAQDMVPYGFNIKTELDEVTKECETEFGAEISSIDYLACLLIDEKTKTQFKTMLMMKEADFFKQNLCN.

An N-terminal signal peptide occupies residues 1-21 (MKQNVFFLIAYFSLVFCMCNA). Disulfide bonds link C28/C61, C41/C147, and C103/C119.

The protein belongs to the PBP/GOBP family. In terms of tissue distribution, female salivary gland.

It localises to the secreted. In contrast to the related D7 salivary proteins that can bind biogenic amines, does not bind serotonin. The protein is Short form salivary protein D7S1 of Aedes aegypti (Yellowfever mosquito).